Consider the following 355-residue polypeptide: MNELKNDRYLRALLRQPVDVTPVWMMRQAGRYLPEYKATRAIAGDFMSLCKNAELACEVTMQPLRRYPLDAAILFSDILTIPDAMGLGLYFETGEGPRFQSPITCRADVEKLPIPDPEQELGYVMNAVRTIRRELAGAVPLIGFSGSPWTLATYMVEGGSSKAFTKLKKMMYAEPQTLHLLLDKLADSVILYLNAQIKAGAQSVMVFDTWGGVLTGRDYAEFSLNYMHKIVDGLIRENDGRRVPVTLFTKGGGQWLEAMAATGCDALGLDWTTDIADARRRVGDKVALQGNMDPSILYAPAARIEEEVSTILAGFGQGEGHVFNLGHGIHQDVPPEHAGAFVKAVHALSKPYHQK.

Substrate is bound by residues 27–31 (RQAGR), aspartate 77, tyrosine 154, threonine 209, and histidine 327.

This sequence belongs to the uroporphyrinogen decarboxylase family. Homodimer.

Its subcellular location is the cytoplasm. The catalysed reaction is uroporphyrinogen III + 4 H(+) = coproporphyrinogen III + 4 CO2. Its pathway is porphyrin-containing compound metabolism; protoporphyrin-IX biosynthesis; coproporphyrinogen-III from 5-aminolevulinate: step 4/4. Its function is as follows. Catalyzes the decarboxylation of four acetate groups of uroporphyrinogen-III to yield coproporphyrinogen-III. This chain is Uroporphyrinogen decarboxylase, found in Yersinia enterocolitica serotype O:8 / biotype 1B (strain NCTC 13174 / 8081).